The sequence spans 331 residues: Fructose-1,6-bisphosphatase class 1 2 (331 aa).

Glu-91, Asp-112, Leu-114, and Asp-115 together coordinate Mg(2+). Residues Asp-115–Ser-118, Asn-207, Tyr-238, and Lys-268 contribute to the substrate site. Glu-274 serves as a coordination point for Mg(2+).

The protein belongs to the FBPase class 1 family. Homotetramer. It depends on Mg(2+) as a cofactor.

The protein resides in the cytoplasm. It catalyses the reaction beta-D-fructose 1,6-bisphosphate + H2O = beta-D-fructose 6-phosphate + phosphate. It functions in the pathway carbohydrate biosynthesis; Calvin cycle. The sequence is that of Fructose-1,6-bisphosphatase class 1 2 from Acaryochloris marina (strain MBIC 11017).